The sequence spans 185 residues: Ribosome-recycling factor (185 aa).

Belongs to the RRF family.

Its subcellular location is the cytoplasm. Its function is as follows. Responsible for the release of ribosomes from messenger RNA at the termination of protein biosynthesis. May increase the efficiency of translation by recycling ribosomes from one round of translation to another. This is Ribosome-recycling factor from Shewanella halifaxensis (strain HAW-EB4).